We begin with the raw amino-acid sequence, 376 residues long: Probable ATP-dependent RNA helicase YfmL (376 aa).

The region spanning 35 to 205 (AQLIMDGKDV…RELAQEPEVL (171 aa)) is the Helicase ATP-binding domain. 48-55 (SPTGTGKT) is an ATP binding site. Residues 153 to 156 (DETD) carry the DEAD box motif. The region spanning 231–374 (KLLQKLSRLE…EAVYAGGKLK (144 aa)) is the Helicase C-terminal domain.

The protein belongs to the DEAD box helicase family.

The enzyme catalyses ATP + H2O = ADP + phosphate + H(+). A probable DEAD-box RNA helicase that plays a role in ribosomal 50S subunit assembly. May be a non-specific RNA helicase. This Bacillus subtilis (strain 168) protein is Probable ATP-dependent RNA helicase YfmL (yfmL).